A 606-amino-acid polypeptide reads, in one-letter code: Membrane protein insertase YidC (606 aa).

The helical transmembrane segment at 8 to 28 threads the bilayer; sequence LILATALSFIVILVWFVLFPP. A disordered region spans residues 33–59; it reads MPLTGETSTELTPDAATGSLPSVTSDT. Transmembrane regions (helical) follow at residues 116 to 136, 348 to 368, 374 to 394, 448 to 468, 506 to 526, and 542 to 562; these read IVTMLSPVGSPGAYYALYGWA, FIDSIDWGWFFFLTKPIFFLL, FIGNMGWAIIGLTLIIKAILL, LPILLQIPIFFSLYKVIFVTI, SIMALIFIGILPLLLGISMWL, and IFAWMPWVFMFMLGGFASGLV.

The protein belongs to the OXA1/ALB3/YidC family. Type 1 subfamily. As to quaternary structure, interacts with the Sec translocase complex via SecD. Specifically interacts with transmembrane segments of nascent integral membrane proteins during membrane integration.

Its subcellular location is the cell inner membrane. Its function is as follows. Required for the insertion and/or proper folding and/or complex formation of integral membrane proteins into the membrane. Involved in integration of membrane proteins that insert both dependently and independently of the Sec translocase complex, as well as at least some lipoproteins. Aids folding of multispanning membrane proteins. The chain is Membrane protein insertase YidC from Roseobacter denitrificans (strain ATCC 33942 / OCh 114) (Erythrobacter sp. (strain OCh 114)).